The following is a 446-amino-acid chain: D(1A) dopamine receptor (446 aa).

Over 1-22 (MPLNDTTMDRRGLVVERDFSFR) the chain is Extracellular. N-linked (GlcNAc...) asparagine glycosylation occurs at N4. The chain crosses the membrane as a helical span at residues 23 to 48 (ILTACFLSLLILSTLLGNTLVCAAVI). At 49-59 (RFRHLRSKVTN) the chain is on the cytoplasmic side. The chain crosses the membrane as a helical span at residues 60 to 86 (FFVISLAVSDLLVAVLVMPWKAVAEIA). Over 87–95 (GFWPFGSFC) the chain is Extracellular. Residues C95 and C185 are joined by a disulfide bond. The chain crosses the membrane as a helical span at residues 96–118 (NIWVAFDIMCSTASILNLCVISV). The Cytoplasmic portion of the chain corresponds to 119 to 137 (DRYWAISSPFRYERKMTPK). A helical membrane pass occupies residues 138–162 (AAFILISVAWTLSVLISFIPVQLNW). At 163 to 191 (HKARPLSSPDGNVSSQDETMDNCDSSLSR) the chain is on the extracellular side. Residues 192-217 (TYAISSSLISFYIPVAIMIVTYTRIY) traverse the membrane as a helical segment. Residues 218–271 (RIAQKQIRRISALERAAVHAKNCQNTTGNGANVECSQPESSFKMSFKRETKVLK) are Cytoplasmic-facing. A helical transmembrane segment spans residues 272–298 (TLSVIMGVFVCCWLPFFILNCMVPFCE). Over 299–315 (SDLPSGETKPFCIDSIT) the chain is Extracellular. Residues 316–340 (FDVFVWFGWANSSLNPIIYAFNADF) form a helical membrane-spanning segment. The Cytoplasmic portion of the chain corresponds to 341-446 (RKAFSTLLGC…PITQNGQHKT (106 aa)). 2 S-palmitoyl cysteine lipidation sites follow: C350 and C354.

The protein belongs to the G-protein coupled receptor 1 family. In terms of assembly, interacts with DNAJC14 via its C-terminus.

The protein resides in the cell membrane. It localises to the endoplasmic reticulum membrane. It is found in the cell projection. Its subcellular location is the cilium membrane. The protein localises to the dendrite. The protein resides in the dendritic spine. This is one of the five types (D1 to D5) of receptors for dopamine. The activity of this receptor is mediated by G proteins which activate adenylyl cyclase. This is D(1A) dopamine receptor (DRD1) from Didelphis virginiana (North American opossum).